The primary structure comprises 106 residues: MPIKGPKARIKLSGLNPRELDRICSQIKEIANKTGVELSGPVPLPTRRMVVPVRKAPDGEGSETWDHWEMRVHKRLIDISADERALRQIMRIQVPRDVNIEIVLES.

It belongs to the universal ribosomal protein uS10 family. In terms of assembly, part of the 30S ribosomal subunit.

In terms of biological role, involved in the binding of tRNA to the ribosomes. This Archaeoglobus fulgidus (strain ATCC 49558 / DSM 4304 / JCM 9628 / NBRC 100126 / VC-16) protein is Small ribosomal subunit protein uS10.